The chain runs to 368 residues: MLIIKESDVKKLISLKEVIDINEQVFIKESKEEVVCPERIILPVEKTQPQQDSNEPINKKQLVGNLYFKPSLVVDESVGIKIVGTFANNANKGLPTVPATIILNDIETGLANAVIGATYITGARTAAGSAISVKYLATESPETIFVFGSSLQAQLHIEMILLLKPTIKKVYISSRSKENVDKLIIQLKNENNYNNDAVEFNYCAATGAGDDKDIINRYLLEADIIVTATSSNEPLFNGHEVLSEKQRDFKKKPLLICAVGSSRPTNRELDSFTISNSNLIVDDVNSCMVSGELFIPINKENIITKSHILGKLSDVVSGKYKQQTTTTTSKSITVYKSSGTAIQDVATANYIYKKALQNNIGYNININD.

It belongs to the ornithine cyclodeaminase/mu-crystallin family.

This is an uncharacterized protein from Dictyostelium discoideum (Social amoeba).